A 327-amino-acid polypeptide reads, in one-letter code: Malate dehydrogenase (327 aa).

Residue 12–18 (GAAGQIA) participates in NAD(+) binding. Substrate-binding residues include Arg-93 and Arg-99. Residues Asn-106, Gln-113, and 130–132 (VGN) each bind NAD(+). Positions 132 and 163 each coordinate substrate. His-188 serves as the catalytic Proton acceptor.

It belongs to the LDH/MDH superfamily. MDH type 2 family.

It carries out the reaction (S)-malate + NAD(+) = oxaloacetate + NADH + H(+). In terms of biological role, catalyzes the reversible oxidation of malate to oxaloacetate. This is Malate dehydrogenase from Acidiphilium cryptum (strain JF-5).